Consider the following 238-residue polypeptide: Ubiquinone biosynthesis O-methyltransferase (238 aa).

S-adenosyl-L-methionine contacts are provided by arginine 40, glycine 59, aspartate 81, and methionine 126.

This sequence belongs to the methyltransferase superfamily. UbiG/COQ3 family.

The catalysed reaction is a 3-demethylubiquinol + S-adenosyl-L-methionine = a ubiquinol + S-adenosyl-L-homocysteine + H(+). It carries out the reaction a 3-(all-trans-polyprenyl)benzene-1,2-diol + S-adenosyl-L-methionine = a 2-methoxy-6-(all-trans-polyprenyl)phenol + S-adenosyl-L-homocysteine + H(+). Its pathway is cofactor biosynthesis; ubiquinone biosynthesis. In terms of biological role, O-methyltransferase that catalyzes the 2 O-methylation steps in the ubiquinone biosynthetic pathway. In Neisseria meningitidis serogroup C (strain 053442), this protein is Ubiquinone biosynthesis O-methyltransferase.